The chain runs to 577 residues: Pyruvate decarboxylase (577 aa).

2 residues coordinate substrate: aspartate 30 and histidine 116. Positions 388–482 (TPGYGVNDFI…FLINNDGYTI (95 aa)) are thiamine pyrophosphate binding. Aspartate 450, asparagine 477, and glycine 479 together coordinate Mg(2+). Glutamate 483 provides a ligand contact to substrate.

It belongs to the TPP enzyme family. As to quaternary structure, homotetramer. The cofactor is a metal cation. Thiamine diphosphate serves as cofactor.

It carries out the reaction a 2-oxocarboxylate + H(+) = an aldehyde + CO2. The polypeptide is Pyruvate decarboxylase (pdcA) (Aspergillus parasiticus).